Consider the following 266-residue polypeptide: uncharacterized protein (266 aa).

Positions 35–131 constitute a PH domain; it reads VLVGEGVLVK…WMLHIERCVT (97 aa). The FYVE-type zinc finger occupies 152-212; that stretch reads DGEAVKCMVC…VCDHCFDSLS (61 aa). Zn(2+) is bound by residues cysteine 158, cysteine 161, cysteine 175, cysteine 178, cysteine 183, cysteine 186, cysteine 204, and cysteine 207. A disordered region spans residues 213–266; it reads SATPGQEESEPKTGNRLHHEDSSSDSEDEVNGSGRSSNESRPTFYREDVQQPAT. Basic and acidic residues-rich tracts occupy residues 221-234 and 256-266; these read SEPKTGNRLHHEDS and FYREDVQQPAT.

This is an uncharacterized protein from Caenorhabditis elegans.